The primary structure comprises 137 residues: Putative pumilio homolog 25 (137 aa).

Pumilio repeat units lie at residues 70–105 and 108–137; these read EFDS…LPHS and SVLV…TRLA.

It is found in the cytoplasm. Sequence-specific RNA-binding protein that regulates translation and mRNA stability by binding the 3'-UTR of target mRNAs. The sequence is that of Putative pumilio homolog 25 (APUM25) from Arabidopsis thaliana (Mouse-ear cress).